The following is a 1464-amino-acid chain: Glutamate receptor ionotropic, NMDA 2A (1464 aa).

An N-terminal signal peptide occupies residues 1 to 22 (MGRVGYWTLLVLPALLVWRGPA). The Extracellular portion of the chain corresponds to 23 to 556 (PSAAAEKGPP…SAFLEPFSAS (534 aa)). His-44 is a binding site for Zn(2+). Asn-75 is a glycosylation site (N-linked (GlcNAc...) asparagine). Cysteines 87 and 320 form a disulfide. Positions 128, 266, and 282 each coordinate Zn(2+). N-linked (GlcNAc...) asparagine glycans are attached at residues Asn-340, Asn-380, Asn-443, and Asn-444. Intrachain disulfides connect Cys-429–Cys-455 and Cys-436–Cys-456. Residues Ser-511, Thr-513, and Arg-518 each coordinate L-glutamate. N-linked (GlcNAc...) asparagine glycosylation occurs at Asn-541. Residues 557-576 (VWVMMFVMLLIVSAIAVFVF) traverse the membrane as a helical segment. The Cytoplasmic segment spans residues 577-600 (EYFSPVGYNRNLAKGKAPHGPSFT). A pore-forming region spans residues 599–620 (FTIGKAIWLLWGLVFNNSVPVQ). Residues 601 to 615 (IGKAIWLLWGLVFNN) constitute an intramembrane region (discontinuously helical). The Cytoplasmic portion of the chain corresponds to 616–625 (SVPVQNPKGT). A helical membrane pass occupies residues 626–646 (TSKIMVSVWAFFAVIFLASYT). The Extracellular portion of the chain corresponds to 647 to 814 (ANLAAFMIQE…NEVMSSQLDI (168 aa)). Residue Asn-687 is glycosylated (N-linked (GlcNAc...) asparagine). L-glutamate-binding residues include Ser-689, Thr-690, and Asp-731. Cys-745 and Cys-800 are joined by a disulfide. The helical transmembrane segment at 815–835 (DNMAGVFYMLAAAMALSLITF) threads the bilayer. The Cytoplasmic segment spans residues 836 to 1464 (IWEHLFYWKL…KKMPSIESDV (629 aa)). Phosphoserine is present on residues Ser-882, Ser-890, and Ser-929. 2 stretches are compositionally biased toward polar residues: residues 1001-1010 (STESKVNSRP) and 1023-1032 (QDSLSQNPVS). Disordered stretches follow at residues 1001-1088 (STES…NFKR) and 1148-1180 (PDPY…GLSN). The residue at position 1025 (Ser-1025) is a Phosphoserine. Basic and acidic residues-rich tracts occupy residues 1033 to 1043 (QRDEATAENRT) and 1052 to 1061 (LPEEMAHSDI). Residues Ser-1059 and Ser-1062 each carry the phosphoserine modification. The span at 1070-1087 (CHREPDNSKNPKTKDNFK) shows a compositional bias: basic and acidic residues. Residues 1165–1180 (LPMNRNPLQNEEGLSN) show a composition bias toward polar residues. Ser-1198 and Ser-1291 each carry phosphoserine. The disordered stretch occupies residues 1335–1372 (KLSGKKSSLFPQGLEDSKRSKSLLPDHTSDNPFLHSHR). A PDZ-binding motif is present at residues 1462–1464 (SDV).

Belongs to the glutamate-gated ion channel (TC 1.A.10.1) family. NR2A/GRIN2A subfamily. As to quaternary structure, heterotetramer. Forms heterotetrameric channels composed of two GluN1/zeta subunits (GRIN1), and two identical GluN2/epsilon subunits (GRIN2A, GRIN2B, GRIN2C or GRIN2D) or GluN3 subunits (GRIN3A or GRIN3B) (in vitro). Can also form heterotetrameric channels that contain at least two GluN1 subunits and at least two different GluN2 subunits (or a combination of one GluN2 and one GluN3 subunits) (in vitro). In vivo, the subunit composition may depend on the expression levels of the different subunits. Found in a complex with GRIN1, GRIN3A and PPP2CB. Found in a complex with GRIN1 and GRIN3B. Interacts with AIP1. Interacts with HIP1 and NETO1. Interacts with SNX27 (via PDZ domain); the interaction is required for recycling to the plasma membrane when endocytosed and prevent degradation in lysosomes. Interacts with PDZ domains of PATJ and DLG4. Interacts with LRFN2. Interacts with RPH3A and DLG4; this ternary complex regulates NMDA receptor composition at postsynaptic membranes. Interacts with SORCS2. Interacts with ARC; preventing ARC oligomerization. Interacts (via the extreme C-terminus) with FRMPD2 (the second PDZ domain); the interaction is direct and is likely to promote NMDAR-mediated neural signal transmission. GRIN2A binds FRMPD2 with lower affinity than GRIN2B.

The protein localises to the cell projection. The protein resides in the dendritic spine. It is found in the cell membrane. It localises to the synapse. Its subcellular location is the postsynaptic cell membrane. The protein localises to the cytoplasmic vesicle membrane. The enzyme catalyses Ca(2+)(in) = Ca(2+)(out). The catalysed reaction is Na(+)(in) = Na(+)(out). It carries out the reaction K(+)(in) = K(+)(out). In terms of biological role, component of N-methyl-D-aspartate (NMDA) receptors (NMDARs) that function as heterotetrameric, ligand-gated cation channels with high calcium permeability and voltage-dependent block by Mg(2+). NMDARs participate in synaptic plasticity for learning and memory formation by contributing to the slow phase of excitatory postsynaptic current, long-term synaptic potentiation, and learning. Channel activation requires binding of the neurotransmitter L-glutamate to the GluN2 subunit, glycine or D-serine binding to the GluN1 subunit, plus membrane depolarization to eliminate channel inhibition by Mg(2+). NMDARs mediate simultaneously the potasium efflux and the influx of calcium and sodium. Each GluN2 subunit confers differential attributes to channel properties, including activation, deactivation and desensitization kinetics, pH sensitivity, Ca2(+) permeability, and binding to allosteric modulators. Participates in the synaptic plasticity regulation through activation by the L-glutamate releaseed by BEST1, into the synaptic cleft, upon F2R/PAR-1 activation in astrocyte. The protein is Glutamate receptor ionotropic, NMDA 2A of Pan troglodytes (Chimpanzee).